A 227-amino-acid polypeptide reads, in one-letter code: Ribonuclease 3 (227 aa).

Residues 4 to 126 enclose the RNase III domain; that stretch reads LDRLERKIGY…IIGAMSLDQG (123 aa). A Mg(2+)-binding site is contributed by Glu39. Residue Asp43 is part of the active site. Asp112 and Glu115 together coordinate Mg(2+). The active site involves Glu115. Residues 153-226 enclose the DRBM domain; it reads DAKTRLQEYL…AEQILKELDI (74 aa).

This sequence belongs to the ribonuclease III family. As to quaternary structure, homodimer. Requires Mg(2+) as cofactor.

The protein resides in the cytoplasm. It catalyses the reaction Endonucleolytic cleavage to 5'-phosphomonoester.. Functionally, digests double-stranded RNA. Involved in the processing of primary rRNA transcript to yield the immediate precursors to the large and small rRNAs (23S and 16S). Processes some mRNAs, and tRNAs when they are encoded in the rRNA operon. Processes pre-crRNA and tracrRNA of type II CRISPR loci if present in the organism. The chain is Ribonuclease 3 from Haemophilus influenzae (strain ATCC 51907 / DSM 11121 / KW20 / Rd).